The primary structure comprises 320 residues: Putative GDP-polyphosphate phosphotransferase PKK2A (320 aa).

Disordered stretches follow at residues 1 to 21 (MRKK…PKLD), 246 to 267 (RPLP…PPRD), and 281 to 320 (EERI…KSKK). Positions 12 to 21 (DFRKNPPKLD) are enriched in basic and acidic residues. Residues 281 to 290 (EERIKKEEKA) are compositionally biased toward basic and acidic residues.

The protein belongs to the polyphosphate kinase 2 (PPK2) family. Class I subfamily.

The catalysed reaction is [phosphate](n) + GTP = [phosphate](n+1) + GDP. This chain is Putative GDP-polyphosphate phosphotransferase PKK2A, found in Corynebacterium glutamicum (strain ATCC 13032 / DSM 20300 / JCM 1318 / BCRC 11384 / CCUG 27702 / LMG 3730 / NBRC 12168 / NCIMB 10025 / NRRL B-2784 / 534).